We begin with the raw amino-acid sequence, 156 residues long: Small ribosomal subunit protein uS7 (156 aa).

The protein belongs to the universal ribosomal protein uS7 family. As to quaternary structure, part of the 30S ribosomal subunit. Contacts proteins S9 and S11.

One of the primary rRNA binding proteins, it binds directly to 16S rRNA where it nucleates assembly of the head domain of the 30S subunit. Is located at the subunit interface close to the decoding center, probably blocks exit of the E-site tRNA. The chain is Small ribosomal subunit protein uS7 from Mycobacteroides abscessus (strain ATCC 19977 / DSM 44196 / CCUG 20993 / CIP 104536 / JCM 13569 / NCTC 13031 / TMC 1543 / L948) (Mycobacterium abscessus).